The sequence spans 432 residues: Putative D-alanyl-D-alanine carboxypeptidase (432 aa).

Residues 7–25 (ATVLLTFSLSAFAVEYPVL) traverse the membrane as a helical; Signal-anchor segment.

The protein belongs to the peptidase S12 family. YfeW subfamily.

Its subcellular location is the cell inner membrane. The catalysed reaction is Preferential cleavage: (Ac)2-L-Lys-D-Ala-|-D-Ala. Also transpeptidation of peptidyl-alanyl moieties that are N-acyl substituents of D-alanine.. This Salmonella schwarzengrund (strain CVM19633) protein is Putative D-alanyl-D-alanine carboxypeptidase.